A 132-amino-acid polypeptide reads, in one-letter code: Large ribosomal subunit protein eL28 (132 aa).

It belongs to the eukaryotic ribosomal protein eL28 family.

The chain is Large ribosomal subunit protein eL28 (rpl28) from Dictyostelium discoideum (Social amoeba).